A 282-amino-acid chain; its full sequence is D-alanine aminotransferase (282 aa).

Tyr-32 is a substrate binding site. Arg-51 serves as a coordination point for pyridoxal 5'-phosphate. Substrate-binding residues include Arg-99 and His-101. The Proton acceptor role is filled by Lys-146. Lys-146 carries the N6-(pyridoxal phosphate)lysine modification. Glu-178 is a binding site for pyridoxal 5'-phosphate.

Belongs to the class-IV pyridoxal-phosphate-dependent aminotransferase family. In terms of assembly, homodimer. The cofactor is pyridoxal 5'-phosphate.

It carries out the reaction D-alanine + 2-oxoglutarate = D-glutamate + pyruvate. In terms of biological role, acts on the D-isomers of alanine, leucine, aspartate, glutamate, aminobutyrate, norvaline and asparagine. The enzyme transfers an amino group from a substrate D-amino acid to the pyridoxal phosphate cofactor to form pyridoxamine and an alpha-keto acid in the first half-reaction. The second half-reaction is the reverse of the first, transferring the amino group from the pyridoxamine to a second alpha-keto acid to form the product D-amino acid via a ping-pong mechanism. This is an important process in the formation of D-alanine and D-glutamate, which are essential bacterial cell wall components. This is D-alanine aminotransferase (dat) from Staphylococcus aureus (strain N315).